Here is a 238-residue protein sequence, read N- to C-terminus: 4-hydroxy-tetrahydrodipicolinate reductase (238 aa).

12–17 contacts NAD(+); it reads GASGRM. Arg-40 is an NADP(+) binding site. NAD(+)-binding positions include 93–95 and 117–120; these read GTT and ASNF. His-149 (proton donor/acceptor) is an active-site residue. His-150 lines the (S)-2,3,4,5-tetrahydrodipicolinate pocket. Lys-153 serves as the catalytic Proton donor. 159 to 160 provides a ligand contact to (S)-2,3,4,5-tetrahydrodipicolinate; the sequence is GT.

This sequence belongs to the DapB family.

It localises to the cytoplasm. The enzyme catalyses (S)-2,3,4,5-tetrahydrodipicolinate + NAD(+) + H2O = (2S,4S)-4-hydroxy-2,3,4,5-tetrahydrodipicolinate + NADH + H(+). The catalysed reaction is (S)-2,3,4,5-tetrahydrodipicolinate + NADP(+) + H2O = (2S,4S)-4-hydroxy-2,3,4,5-tetrahydrodipicolinate + NADPH + H(+). Its pathway is amino-acid biosynthesis; L-lysine biosynthesis via DAP pathway; (S)-tetrahydrodipicolinate from L-aspartate: step 4/4. Its function is as follows. Catalyzes the conversion of 4-hydroxy-tetrahydrodipicolinate (HTPA) to tetrahydrodipicolinate. The chain is 4-hydroxy-tetrahydrodipicolinate reductase from Xanthomonas euvesicatoria pv. vesicatoria (strain 85-10) (Xanthomonas campestris pv. vesicatoria).